Reading from the N-terminus, the 203-residue chain is Urease accessory protein UreG (203 aa).

Residue 12–19 (GPVGSGKT) participates in GTP binding.

Belongs to the SIMIBI class G3E GTPase family. UreG subfamily. In terms of assembly, homodimer. UreD, UreF and UreG form a complex that acts as a GTP-hydrolysis-dependent molecular chaperone, activating the urease apoprotein by helping to assemble the nickel containing metallocenter of UreC. The UreE protein probably delivers the nickel.

Its subcellular location is the cytoplasm. Facilitates the functional incorporation of the urease nickel metallocenter. This process requires GTP hydrolysis, probably effectuated by UreG. This chain is Urease accessory protein UreG, found in Nitrosococcus oceani (strain ATCC 19707 / BCRC 17464 / JCM 30415 / NCIMB 11848 / C-107).